We begin with the raw amino-acid sequence, 252 residues long: MFS-type transporter cctQ (252 aa).

The next 2 membrane-spanning stretches (helical) occupy residues 54 to 74 and 116 to 136; these read IGSL…VVLP and FGSF…IVGF. A glycan (N-linked (GlcNAc...) asparagine) is linked at asparagine 179. Transmembrane regions (helical) follow at residues 180–200 and 208–228; these read FSIC…WILA and FLVW…YFTT.

It belongs to the major facilitator superfamily.

Its subcellular location is the membrane. The protein operates within mycotoxin biosynthesis. MFS-type transporter; part of the gene cluster that mediates the biosynthesis of the mycotoxin cyclochlorotine, a hepatotoxic and carcinogenic cyclic chlorinated pentapeptide. Most likely responsible for cyclochlorotine secretion and thereby may contribute to intrinsic resistance. This chain is MFS-type transporter cctQ, found in Talaromyces islandicus (Penicillium islandicum).